A 328-amino-acid chain; its full sequence is Cytochrome f (328 aa).

Residues 1–44 (MRTFNFLSFPQVHRQALVKAVLVAIATVSLLLTSDVINPQSAQA) form the signal peptide. The heme site is built by Tyr45, Cys66, Cys69, and His70. A helical transmembrane segment spans residues 294 to 314 (IKGLVLFLGGIMLCQILLVIK).

It belongs to the cytochrome f family. In terms of assembly, the 4 large subunits of the cytochrome b6-f complex are cytochrome b6, subunit IV (17 kDa polypeptide, PetD), cytochrome f and the Rieske protein, while the 4 small subunits are PetG, PetL, PetM and PetN. The complex functions as a dimer. It depends on heme as a cofactor.

It localises to the cellular thylakoid membrane. Its function is as follows. Component of the cytochrome b6-f complex, which mediates electron transfer between photosystem II (PSII) and photosystem I (PSI), cyclic electron flow around PSI, and state transitions. This Microcystis aeruginosa (strain NIES-843 / IAM M-2473) protein is Cytochrome f.